The primary structure comprises 1116 residues: Error-prone DNA polymerase (1116 aa).

The protein belongs to the DNA polymerase type-C family. DnaE2 subfamily.

The protein localises to the cytoplasm. It catalyses the reaction DNA(n) + a 2'-deoxyribonucleoside 5'-triphosphate = DNA(n+1) + diphosphate. Its function is as follows. DNA polymerase involved in damage-induced mutagenesis and translesion synthesis (TLS). It is not the major replicative DNA polymerase. This chain is Error-prone DNA polymerase, found in Sinorhizobium medicae (strain WSM419) (Ensifer medicae).